A 321-amino-acid chain; its full sequence is Aspartate carbamoyltransferase catalytic subunit (321 aa).

Carbamoyl phosphate is bound by residues Arg64 and Thr65. Lys92 is a binding site for L-aspartate. 3 residues coordinate carbamoyl phosphate: Arg114, His144, and Gln147. The L-aspartate site is built by Arg177 and Arg232. Gly273 and Pro274 together coordinate carbamoyl phosphate.

This sequence belongs to the aspartate/ornithine carbamoyltransferase superfamily. ATCase family. Heterododecamer (2C3:3R2) of six catalytic PyrB chains organized as two trimers (C3), and six regulatory PyrI chains organized as three dimers (R2).

It catalyses the reaction carbamoyl phosphate + L-aspartate = N-carbamoyl-L-aspartate + phosphate + H(+). It functions in the pathway pyrimidine metabolism; UMP biosynthesis via de novo pathway; (S)-dihydroorotate from bicarbonate: step 2/3. Functionally, catalyzes the condensation of carbamoyl phosphate and aspartate to form carbamoyl aspartate and inorganic phosphate, the committed step in the de novo pyrimidine nucleotide biosynthesis pathway. This chain is Aspartate carbamoyltransferase catalytic subunit, found in Alkalilimnicola ehrlichii (strain ATCC BAA-1101 / DSM 17681 / MLHE-1).